The following is a 436-amino-acid chain: ATP-dependent protease ATPase subunit HslU (436 aa).

ATP-binding positions include I19, G61 to T65, D249, E314, and R386.

It belongs to the ClpX chaperone family. HslU subfamily. As to quaternary structure, a double ring-shaped homohexamer of HslV is capped on each side by a ring-shaped HslU homohexamer. The assembly of the HslU/HslV complex is dependent on binding of ATP.

It is found in the cytoplasm. ATPase subunit of a proteasome-like degradation complex; this subunit has chaperone activity. The binding of ATP and its subsequent hydrolysis by HslU are essential for unfolding of protein substrates subsequently hydrolyzed by HslV. HslU recognizes the N-terminal part of its protein substrates and unfolds these before they are guided to HslV for hydrolysis. The chain is ATP-dependent protease ATPase subunit HslU from Bartonella tribocorum (strain CIP 105476 / IBS 506).